The sequence spans 109 residues: Ribonuclease (109 aa).

The active-site Proton acceptor is the E72. H101 serves as the catalytic Proton donor.

It belongs to the ribonuclease N1/T1 family.

It localises to the secreted. In terms of biological role, hydrolyzes phosphodiester bonds in RNA, poly- and oligoribonucleotides resulting in 3'-nucleoside monophosphates via 2',3'-cyclophosphate intermediates. The polypeptide is Ribonuclease (Heyndrickxia coagulans (Weizmannia coagulans)).